The following is a 316-amino-acid chain: tRNA uridine(34) hydroxylase (316 aa).

One can recognise a Rhodanese domain in the interval 123–217 (LSDDTVVIDA…YGKDPETKGE (95 aa)). The Cysteine persulfide intermediate role is filled by C177.

The protein belongs to the TrhO family.

The catalysed reaction is uridine(34) in tRNA + AH2 + O2 = 5-hydroxyuridine(34) in tRNA + A + H2O. Catalyzes oxygen-dependent 5-hydroxyuridine (ho5U) modification at position 34 in tRNAs. This is tRNA uridine(34) hydroxylase from Staphylococcus saprophyticus subsp. saprophyticus (strain ATCC 15305 / DSM 20229 / NCIMB 8711 / NCTC 7292 / S-41).